We begin with the raw amino-acid sequence, 474 residues long: PRAME family member 10 (474 aa).

An LRR 1; degenerate repeat occupies 97–124 (RWKLQVLDLRDVDENFWTIWSGARVLSC). The stretch at 179–203 (HLCCSKVQNYSMPTSSFRNLLERIY) is one LRR 2; degenerate repeat. One copy of the LRR 3; degenerate repeat lies at 204-230 (PDSIQELEVWKKCSLNKTGKFAPYLSQ). One copy of the LRR 4; degenerate repeat lies at 231–265 (MSNLRELFLAFGYERELYVSVQWPCIPDLDSPFLC). LRR repeat units lie at residues 266-291 (LYYPQMLYIKKISNIKEHLEHLLRYL), 292-323 (KNPLGAFIFSDAYLTDRDMECLSQYPSLSQLK), 324-342 (ELRLIHILMWTTNLEPLGV), 348-375 (AATLKTLVLKDCRIQDPQLRVLLPALSH), and 376-400 (CSQLTTFNFHGNETSMNALKDLLRH).

It belongs to the PRAME family.

The polypeptide is PRAME family member 10 (Homo sapiens (Human)).